Consider the following 642-residue polypeptide: Threonine--tRNA ligase (642 aa).

Residues 1-61 (MPIITLPDGS…TEDAELQLIT (61 aa)) enclose the TGS domain. The catalytic stretch occupies residues 242 to 535 (DHRKLGKSLD…LVEHYEGKFP (294 aa)). Zn(2+) is bound by residues Cys-333, His-384, and His-512.

Belongs to the class-II aminoacyl-tRNA synthetase family. In terms of assembly, homodimer. Zn(2+) is required as a cofactor.

It localises to the cytoplasm. It carries out the reaction tRNA(Thr) + L-threonine + ATP = L-threonyl-tRNA(Thr) + AMP + diphosphate + H(+). Functionally, catalyzes the attachment of threonine to tRNA(Thr) in a two-step reaction: L-threonine is first activated by ATP to form Thr-AMP and then transferred to the acceptor end of tRNA(Thr). Also edits incorrectly charged L-seryl-tRNA(Thr). The polypeptide is Threonine--tRNA ligase (Hydrogenovibrio crunogenus (strain DSM 25203 / XCL-2) (Thiomicrospira crunogena)).